The following is a 103-amino-acid chain: Large ribosomal subunit protein bL21 (103 aa).

The protein belongs to the bacterial ribosomal protein bL21 family. In terms of assembly, part of the 50S ribosomal subunit. Contacts protein L20.

In terms of biological role, this protein binds to 23S rRNA in the presence of protein L20. In Thioalkalivibrio sulfidiphilus (strain HL-EbGR7), this protein is Large ribosomal subunit protein bL21.